The chain runs to 220 residues: Putative 3-methyladenine DNA glycosylase (220 aa).

Belongs to the DNA glycosylase MPG family.

This Rickettsia bellii (strain RML369-C) protein is Putative 3-methyladenine DNA glycosylase.